The sequence spans 443 residues: ATP-dependent protease ATPase subunit HslU (443 aa).

ATP is bound by residues Val-18 and 60-65 (GVGKTE). The disordered stretch occupies residues 136-158 (LPPPRDFNEDSQRTNADSSTRQL). The span at 148-157 (RTNADSSTRQ) shows a compositional bias: polar residues. ATP is bound by residues Asp-256, Glu-321, and Arg-393.

The protein belongs to the ClpX chaperone family. HslU subfamily. As to quaternary structure, a double ring-shaped homohexamer of HslV is capped on each side by a ring-shaped HslU homohexamer. The assembly of the HslU/HslV complex is dependent on binding of ATP.

It is found in the cytoplasm. Its function is as follows. ATPase subunit of a proteasome-like degradation complex; this subunit has chaperone activity. The binding of ATP and its subsequent hydrolysis by HslU are essential for unfolding of protein substrates subsequently hydrolyzed by HslV. HslU recognizes the N-terminal part of its protein substrates and unfolds these before they are guided to HslV for hydrolysis. The protein is ATP-dependent protease ATPase subunit HslU of Marinobacter nauticus (strain ATCC 700491 / DSM 11845 / VT8) (Marinobacter aquaeolei).